The chain runs to 320 residues: Olfactory receptor 10J1 (320 aa).

At 1–36 (MLLCFRFGNQSMKRENFTLITDFVFQGFSSFHEQQI) the chain is on the extracellular side. 2 N-linked (GlcNAc...) asparagine glycosylation sites follow: asparagine 9 and asparagine 16. Residues 37 to 57 (TLFGVFLALYILTLAGNIIIV) traverse the membrane as a helical segment. The Cytoplasmic segment spans residues 58–65 (TIIRMDLH). Residues 66–86 (LHTPMYFFLSMLSTSETVYTL) form a helical membrane-spanning segment. Residues 87–110 (VILPRMLSSLVGMSQPISLAGCAT) are Extracellular-facing. The cysteines at positions 108 and 199 are disulfide-linked. The chain crosses the membrane as a helical span at residues 111-131 (QMFFFVTFGITNCFLLTAMGY). Residues 132–150 (DRYVAICNPLRYMVIMNKR) are Cytoplasmic-facing. A helical membrane pass occupies residues 151-171 (LRIQLVLGACSIGLIVAITQV). The Extracellular segment spans residues 172-207 (TSVFRLPFCARKVPHFFCDIRPVMKLSCIDTTVNEI). The helical transmembrane segment at 208–227 (LTLIISVLVLVVPMGLVFIS) threads the bilayer. The Cytoplasmic segment spans residues 228 to 247 (YVLIISTILKIASVEGRKKA). A helical transmembrane segment spans residues 248–268 (FATCASHLTVVIVHYSCASIA). At 269 to 281 (YLKPKSENTREHD) the chain is on the extracellular side. The helical transmembrane segment at 282 to 302 (QLISVTYTVITPLLNPVVYTL) threads the bilayer. Over 303 to 320 (RNKEVKDALCRAVGGKFS) the chain is Cytoplasmic.

It belongs to the G-protein coupled receptor 1 family.

It localises to the cell membrane. Functionally, odorant receptor. The chain is Olfactory receptor 10J1 (OR10J1) from Homo sapiens (Human).